A 21-amino-acid polypeptide reads, in one-letter code: Putative sperm adenylate cyclase (21 aa).

It carries out the reaction ATP = 3',5'-cyclic AMP + diphosphate. This is Putative sperm adenylate cyclase from Mus musculus (Mouse).